Reading from the N-terminus, the 118-residue chain is Large ribosomal subunit protein bL20c (118 aa).

Belongs to the bacterial ribosomal protein bL20 family.

The protein localises to the plastid. Binds directly to 23S ribosomal RNA and is necessary for the in vitro assembly process of the 50S ribosomal subunit. It is not involved in the protein synthesizing functions of that subunit. The polypeptide is Large ribosomal subunit protein bL20c (Aneura mirabilis (Parasitic liverwort)).